The primary structure comprises 144 residues: Maximins 10/H15 (144 aa).

An N-terminal signal peptide occupies residues 1–18 (MNFKYIVAVSFLIASAYA). Positions 19-43 (RSVQNDEQSLSQRDVLEEESLREIR) are excised as a propeptide. The residue at position 70 (Ser70) is a Serine amide. The propeptide occupies 74–123 (TAEDHEVMKRLEAVMRDLDSLDYPEEATERETRGFNQEEIANLFTKKEKR). Leu143 bears the Leucine amide mark.

This sequence belongs to the bombinin family. Expressed by the skin glands.

Its subcellular location is the secreted. Maximin-10 shows antimicrobial activity against bacteria and against the fungus C.albicans. It has little hemolytic activity. Its function is as follows. Maximin-H15 shows antimicrobial activity against bacteria and against the fungus C.albicans. Shows strong hemolytic activity. The polypeptide is Maximins 10/H15 (Bombina maxima (Giant fire-bellied toad)).